Consider the following 440-residue polypeptide: Adenylosuccinate synthetase (440 aa).

GTP contacts are provided by residues 12–18 (GDEGKGK) and 40–42 (GHT). The active-site Proton acceptor is the Asp13. The Mg(2+) site is built by Asp13 and Gly40. IMP-binding positions include 13–16 (DEGK), 38–41 (NAGH), Thr128, Arg142, Gln223, Thr238, and Arg302. His41 acts as the Proton donor in catalysis. Substrate is bound at residue 298 to 304 (TTTGRPR). GTP contacts are provided by residues Arg304, 330-332 (KLD), and 412-414 (SVG).

Belongs to the adenylosuccinate synthetase family. Homodimer. The cofactor is Mg(2+).

The protein resides in the cytoplasm. It catalyses the reaction IMP + L-aspartate + GTP = N(6)-(1,2-dicarboxyethyl)-AMP + GDP + phosphate + 2 H(+). The protein operates within purine metabolism; AMP biosynthesis via de novo pathway; AMP from IMP: step 1/2. In terms of biological role, plays an important role in the de novo pathway of purine nucleotide biosynthesis. Catalyzes the first committed step in the biosynthesis of AMP from IMP. The chain is Adenylosuccinate synthetase from Gloeobacter violaceus (strain ATCC 29082 / PCC 7421).